Here is a 285-residue protein sequence, read N- to C-terminus: NADPH-dependent 7-cyano-7-deazaguanine reductase (285 aa).

91–93 (IES) provides a ligand contact to substrate. 93–94 (SK) serves as a coordination point for NADPH. The active-site Thioimide intermediate is Cys-191. Asp-198 functions as the Proton donor in the catalytic mechanism. 230–231 (HE) contacts substrate. Position 259 to 260 (259 to 260 (RG)) interacts with NADPH.

The protein belongs to the GTP cyclohydrolase I family. QueF type 2 subfamily. Homodimer.

It is found in the cytoplasm. It catalyses the reaction 7-aminomethyl-7-carbaguanine + 2 NADP(+) = 7-cyano-7-deazaguanine + 2 NADPH + 3 H(+). Its pathway is tRNA modification; tRNA-queuosine biosynthesis. Functionally, catalyzes the NADPH-dependent reduction of 7-cyano-7-deazaguanine (preQ0) to 7-aminomethyl-7-deazaguanine (preQ1). In Legionella pneumophila (strain Paris), this protein is NADPH-dependent 7-cyano-7-deazaguanine reductase.